A 292-amino-acid chain; its full sequence is mRNA export protein 33 (292 aa).

A disordered region spans residues 1–76; that stretch reads MPPKKAAKGK…RKRREEEKRA (76 aa). Composition is skewed to basic and acidic residues over residues 9–26 and 58–76; these read GKGDPGKAAKKDPTKKAA and KDAKRQEALRKRREEEKRA. The C3H1-type zinc-finger motif lies at 134–172; sequence INTDIVCKFFLEACETGKYGWLWQCPNGNMTCIYKHALP.

The protein resides in the cytoplasm. Its function is as follows. Functions as a component of the nuclear pore complex (NPC). NPC components, collectively referred to as nucleoporins (NUPs), can play the role of both NPC structural components and of docking or interaction partners for transiently associated nuclear transport factors. Active directional transport is assured by both, a Phe-Gly (FG) repeat affinity gradient for these transport factors across the NPC and a transport cofactor concentration gradient across the nuclear envelope. Involved in the export of mRNA from the nucleus to the cytoplasm. May play a role in mitotic spindle formation and/or function. This is mRNA export protein 33 (mep33) from Schizosaccharomyces pombe (strain 972 / ATCC 24843) (Fission yeast).